Here is a 314-residue protein sequence, read N- to C-terminus: Zinc transporter ZIP3 (314 aa).

Residues 1–3 (MNL) lie on the Extracellular side of the membrane. Residues 4–24 (IFAKVLCLLAILVLMMLGSLI) form a helical membrane-spanning segment. At 25 to 41 (PVKISEADFDKSSRSRK) the chain is on the cytoplasmic side. A helical transmembrane segment spans residues 42-62 (ILSLSNSFAGGVFLATCFNAL). The Extracellular portion of the chain corresponds to 63-84 (LPAVREKFFDLLKIGNISTDYP). The chain crosses the membrane as a helical span at residues 85-105 (LAETIMMVGFFLTVFVEQTVM). Residues 106-169 (TFRKEKPSFI…KELSSSSPIR (64 aa)) are Cytoplasmic-facing. The helical transmembrane segment at 170–190 (LFSLVFALSAHSVFEGLALGL) threads the bilayer. Over 191–196 (QEDGNK) the chain is Extracellular. The helical transmembrane segment at 197–217 (LLSLFIGVVIHETLVAMALGV) threads the bilayer. Topologically, residues 218 to 229 (SMAKVNTHLKDA) are cytoplasmic. The chain crosses the membrane as a helical span at residues 230–250 (IKMAVLVSTMIPIGIVVGMAI). The Extracellular portion of the chain corresponds to 251–262 (QSAQNMASSIAS). The helical transmembrane segment at 263-283 (ALLQGIAGGTFIFVTFFEILV) threads the bilayer. Over 284-292 (KELEEKNDR) the chain is Cytoplasmic. A helical membrane pass occupies residues 293 to 313 (LLKVLFLVLGYTVLAVLVLFK). A topological domain (extracellular) is located at residue Trp-314.

Belongs to the ZIP transporter (TC 2.A.5) family.

The protein localises to the cell membrane. It localises to the apical cell membrane. The catalysed reaction is Zn(2+)(in) = Zn(2+)(out). Its function is as follows. Transporter for the divalent cation Zn(2+). Mediates the influx of Zn(2+) into cells from extracellular space. In Xenopus tropicalis (Western clawed frog), this protein is Zinc transporter ZIP3 (slc39a3).